The chain runs to 72 residues: UPF0270 protein YheU (72 aa).

This sequence belongs to the UPF0270 family.

The chain is UPF0270 protein YheU from Escherichia coli (strain UTI89 / UPEC).